The primary structure comprises 601 residues: Cdc42-interacting protein 4 (601 aa).

The tract at residues 1 to 117 (MDWGTELWDQ…EMKQERKMHF (117 aa)) is required for translocation to the plasma membrane in response to insulin, podosome formation and interaction with AKAP9 and microtubules. An F-BAR domain is found at 1 to 264 (MDWGTELWDQ…AANAVDPKND (264 aa)). A coiled-coil region spans residues 67-259 (FSQQQSFVQI…EGMKVAANAV (193 aa)). Disordered stretches follow at residues 280–358 (GDVE…GRDP), 390–420 (DFSH…EVDQ), and 478–543 (NRGD…SPIG). Positions 289–302 (QPMNRAPSDSSLGT) are enriched in polar residues. The interaction with CDC42 stretch occupies residues 293–537 (RAPSDSSLGT…TEFDEDFEEE (245 aa)). The tract at residues 293-601 (RAPSDSSLGT…PTSYLRVTLN (309 aa)) is interaction with PDE6G. A phosphoserine mark is found at Ser-296, Ser-298, and Ser-299. Residues 314–329 (GRSRTKRWPFGKKNKP) show a composition bias toward basic residues. A Phosphoserine modification is found at Ser-335. Residues 336–346 (PLGGPVPSALP) show a composition bias toward low complexity. Residue Ser-351 is modified to Phosphoserine. Residues 388–481 (TEDFSHLPPE…ESRVLSNRGD (94 aa)) adopt a coiled-coil conformation. Positions 393-470 (HLPPEQQRKR…VQKYEAWLAE (78 aa)) constitute an REM-1 domain. The segment covering 407 to 420 (LEERSRELQKEVDQ) has biased composition (basic and acidic residues). The required for interaction with FASLG and localization to lysosomes stretch occupies residues 471–601 (AESRVLSNRG…PTSYLRVTLN (131 aa)). Residue Ser-482 is modified to Phosphoserine. The interaction with DNM2 and WASL stretch occupies residues 487–541 (ARPPDPPTSAPPDSSSNSASQDTKESSEEPPSEESQDTPIYTEFDEDFEEEPTSP). The segment covering 497–506 (PPDSSSNSAS) has biased composition (low complexity). A compositionally biased stretch (acidic residues) spans 529-538 (EFDEDFEEEP). Residues 529 to 601 (EFDEDFEEEP…PTSYLRVTLN (73 aa)) are interaction with DNM1 and WASL. The segment at 538–601 (PTSPIGHCVA…PTSYLRVTLN (64 aa)) is required for podosome formation. An SH3 domain is found at 540 to 601 (SPIGHCVAIY…PTSYLRVTLN (62 aa)). Residues 544 to 601 (HCVAIYHFEGSSEGTISMAEGEDLSLMEEDKGDGWTRVRRKEGGEGYVPTSYLRVTLN) form an interaction with WAS region. An interaction with ARHGAP17, DAAM1, DIAPH1 and DIAPH2 region spans residues 546 to 601 (VAIYHFEGSSEGTISMAEGEDLSLMEEDKGDGWTRVRRKEGGEGYVPTSYLRVTLN).

It belongs to the FNBP1 family. Homodimerizes, the dimers can polymerize end-to-end to form filamentous structures. Interacts with AKAP9, ARHGAP17, DAAM1, DIAPH1, DIAPH2, DNM1, FASLG/FASL, GAPVD1, LYN, microtubules, PDE6G, SRC and WAS/WASP. Interacts with the ligand binding domain of the thyroid receptor (TR) in the presence of thyroid hormone. May interact with CTNNB1 and HD/HTT. Interacts specifically with GTP-bound CDC42 and RHOQ. Interacts with DNM2 and WASL. In terms of processing, tyrosine phosphorylated. Also phosphorylated by PKA.

The protein resides in the cytoplasm. It is found in the cytoskeleton. It localises to the cell cortex. The protein localises to the lysosome. Its subcellular location is the golgi apparatus. The protein resides in the cell membrane. It is found in the cell projection. It localises to the phagocytic cup. In terms of biological role, required to coordinate membrane tubulation with reorganization of the actin cytoskeleton during endocytosis. Also acts as a link between CDC42 signaling and regulation of the actin cytoskeleton. Binds to lipids such as phosphatidylinositol 4,5-bisphosphate and phosphatidylserine and promotes membrane invagination and the formation of tubules. Also enhances actin polymerization in the vicinity of membrane tubules by recruiting WASL/N-WASP which in turn activates the Arp2/3 complex. Actin polymerization and dynamin may promote the fission of membrane tubules to form endocytic vesicles. Required for the formation of podosomes, actin-rich adhesion structures specific to monocyte-derived cells. Required for translocation of GLUT4 to the plasma membrane in response to insulin signaling. May be required for the lysosomal retention of FASLG/FASL. The polypeptide is Cdc42-interacting protein 4 (TRIP10) (Pongo abelii (Sumatran orangutan)).